The primary structure comprises 167 residues: Adenylylsulfate reductase subunit beta (167 aa).

4Fe-4S ferredoxin-type domains lie at 1–35 (MPTF…LDPE) and 38–67 (KAFN…ARPY). Cysteine 10, cysteine 13, cysteine 21, cysteine 25, cysteine 47, cysteine 50, cysteine 53, and cysteine 57 together coordinate [4Fe-4S] cluster.

In terms of assembly, heterodimer composed of AprA and AprB. The heterodimers can dimerize to form heterotetramers. [4Fe-4S] cluster serves as cofactor.

The protein resides in the cytoplasm. Iron-sulfur cluster subunit of the adenylylsulfate reductase which catalyzes reversibly the reduction of adenosine 5'-phosphosulfate (APS) to sulfite and AMP during dissimilatory sulfate reduction. The iron-sulfur cluster 2 is thought to accept electrons from a still unknown electron donor and transfer electrons to the iron-sulfur cluster 1 of this protein and then onto the FAD of AprA. The protein is Adenylylsulfate reductase subunit beta of Megalodesulfovibrio gigas (strain ATCC 19364 / DSM 1382 / NCIMB 9332 / VKM B-1759) (Desulfovibrio gigas).